The primary structure comprises 135 residues: MAVSSGTSGMLATCLFMLLFATMQIYKSQLTSSQPMAIVGGFLGSVLFILILTAISNFETHFFGRNFQTKLIPEVVIALVIAMAASGMVHRVCITTCLIFSIVALYYVSRISIKVHGSGAGTATAIPVTKGKKGK.

4 consecutive transmembrane segments (helical) span residues Met1 to Ala21, Pro35 to Ile55, Thr69 to Val89, and Cys93 to Ile113.

Belongs to the KRTCAP2 family. In terms of assembly, component of the oligosaccharyltransferase (OST) complex.

The protein resides in the membrane. In terms of biological role, subunit of the oligosaccharyl transferase (OST) complex that catalyzes the initial transfer of a defined glycan (Glc(3)Man(9)GlcNAc(2) in eukaryotes) from the lipid carrier dolichol-pyrophosphate to an asparagine residue within an Asn-X-Ser/Thr consensus motif in nascent polypeptide chains, the first step in protein N-glycosylation. N-glycosylation occurs cotranslationally and the complex associates with the Sec61 complex at the channel-forming translocon complex that mediates protein translocation across the endoplasmic reticulum (ER). All subunits are required for a maximal enzyme activity. This chain is Protein KRTCAP2 homolog, found in Ixodes scapularis (Black-legged tick).